We begin with the raw amino-acid sequence, 368 residues long: MARERRDSKAATFFCLAWALCLALPGYPQHVSGREDRADWTQEKYSHRPTILNATCILQVTSQTNVSRMWQNDLHPILIERYPGSPGSYAVRQHIKHRLQGLQAGWLVEEDTFQSHTPYGYRTFSNIISTLNPLAKRHLVIACHYDSKYFPPQLDGKVFVGATDSAVPCAMMLELARSLDRPLSFLKQSSLPPKADLSLKLIFFDGEEAFVRWSPSDSLYGSRSLAQKMASTPHPPGARNTYQIRGIDLFVLLDLIGARNPVFPVYFLNTARWFGRLEAIERNLNDLGLLNNYSSERQYFRSNLRRHPVEDDHIPFLRRGVPILHLIPSPFPRVWHTMEDNEENLDKPTIDNLSKILQVFVLEYLNLG.

The N-terminal stretch at 1-23 (MARERRDSKAATFFCLAWALCLA) is a signal peptide. 2 N-linked (GlcNAc...) asparagine glycosylation sites follow: N53 and N65. Residues C143 and C169 are joined by a disulfide bond. D164 lines the Zn(2+) pocket. The Proton acceptor role is filled by E207. Residue E208 coordinates Zn(2+). The active-site Proton acceptor is D254. N-linked (GlcNAc...) asparagine glycosylation is present at N292. Residue H336 coordinates Zn(2+). N-linked (GlcNAc...) asparagine glycosylation occurs at N352.

It belongs to the glutaminyl-peptide cyclotransferase family. Expressed by the venom gland.

The protein resides in the secreted. It carries out the reaction N-terminal L-glutaminyl-[peptide] = N-terminal 5-oxo-L-prolyl-[peptide] + NH4(+). Its function is as follows. Responsible for the biosynthesis of pyroglutamyl peptides. Has a bias against acidic and tryptophan residues adjacent to the N-terminal glutaminyl residue and a lack of importance of chain length after the second residue. Also catalyzes N-terminal pyroglutamate formation. The polypeptide is Glutaminyl-peptide cyclotransferase (QPCT) (Bothrops jararaca (Jararaca)).